The primary structure comprises 135 residues: Holo-[acyl-carrier-protein] synthase (135 aa).

Mg(2+) is bound by residues Asp-8 and Glu-57.

It belongs to the P-Pant transferase superfamily. AcpS family. The cofactor is Mg(2+).

It is found in the cytoplasm. The enzyme catalyses apo-[ACP] + CoA = holo-[ACP] + adenosine 3',5'-bisphosphate + H(+). Transfers the 4'-phosphopantetheine moiety from coenzyme A to a Ser of acyl-carrier-protein. The sequence is that of Holo-[acyl-carrier-protein] synthase from Methylobacterium sp. (strain 4-46).